The following is a 174-amino-acid chain: Myelin basic protein (174 aa).

The disordered stretch occupies residues 1-86 (MASQKRSSFR…GRPGDDNPVV (86 aa)). Ala-2 bears the N-acetylalanine; in forms C1, C2 and C3 mark. Deamidated glutamine; in forms C1 and C2; partial is present on Gln-4. Ser-8 carries the phosphoserine; in forms C2 and C3 modification. At Ser-19 the chain carries Phosphoserine; in form C2. A compositionally biased stretch (basic and acidic residues) spans 22 to 35 (DHARHGSPRHRDSG). Residue Arg-25 is modified to Citrulline; in forms C1, C2 and C3. A Phosphoserine; in forms C2 and C3 modification is found at Ser-34. Arg-42 is modified (citrulline; in form C3). Residues 45–61 (GGDRHVPRRGFGKDIHA) are compositionally biased toward basic and acidic residues. Ser-65 bears the Phosphoserine; in forms C2 and C3 mark. The residue at position 72 (Gln-72) is a Deamidated glutamine; in forms C1, C2 and C3; partial. Ser-74 bears the Phosphoserine; in form C2 mark. Asn-91 is modified (deamidated asparagine; in forms C1, C2 and C3; partial). Thr-97 bears the Phosphothreonine; in forms C2 and C3 mark. The residue at position 102 (Gln-102) is a Deamidated glutamine; in forms C1, C2 and C3; partial. At Gln-102 the chain carries Deamidated glutamine; in form C1. Arg-106 is modified (omega-N-methylarginine; in forms C1, C2 and C3; alternate). A Symmetric dimethylarginine; in forms C1, C2 and C3; alternate modification is found at Arg-106. Ser-114 and Ser-142 each carry phosphoserine; in forms C2 and C3. Residues 126-174 (SGKFYEHKSAHKGHKGSYHEGQGTLSKIFKLGGSGSRPGSRSGSPVARR) are disordered. Residue Gln-147 is modified to Deamidated glutamine; in forms C1, C2 and C3; partial. The segment covering 162-174 (RPGSRSGSPVARR) has biased composition (low complexity). Residue Ser-165 is modified to Phosphoserine; in forms C2 and C3. Arg-166 carries the post-translational modification Citrulline; in forms C2 and C3. Residue Ser-169 is modified to Phosphoserine; in forms C2 and C3.

It belongs to the myelin basic protein family. In terms of assembly, homodimer. Post-translationally, several charge isomers are produced as a result of optional post-translational modifications, such as phosphorylation of serine or threonine residues, deamidation of glutamine or asparagine residues, citrullination and methylation of arginine residues. Chicken MBP contains 4 charge components denoted as C1, C2, C3 and C8. C1 lacks any phosphorylation sites, whereas C2 and C3 contain respectively 10 and 8 phosphorylation sites and arginine residues modified to citrulline. All three charge components contain deamidated glutamines and asparagine, and a methylated arginine.

Its subcellular location is the myelin membrane. Functionally, is, with PLP, the most abundant protein component of the myelin membrane in the CNS. Has a role in both the formation and stabilization of this compact multilayer arrangement of bilayers. Each splice variant and charge isomer may have a specialized function in the assembly of an optimized, biochemically functional myelin membrane. This Gallus gallus (Chicken) protein is Myelin basic protein (MBP).